Consider the following 356-residue polypeptide: GTPase Obg (356 aa).

The region spanning 1–159 (MKFLDEAKVY…RWIWLRMKLI (159 aa)) is the Obg domain. Residues 160–327 (ADAGLVGLPN…VLRALTDVIS (168 aa)) enclose the OBG-type G domain. Residues 166 to 173 (GLPNAGKS), 191 to 195 (FTTLH), 212 to 215 (DIPG), 279 to 282 (NKID), and 308 to 310 (SGV) contribute to the GTP site. Mg(2+)-binding residues include Ser173 and Thr193. The disordered stretch occupies residues 329-356 (APVSTKAKGEPTENETPPPSTGWSPLSN).

Belongs to the TRAFAC class OBG-HflX-like GTPase superfamily. OBG GTPase family. Monomer. Mg(2+) is required as a cofactor.

It localises to the cytoplasm. An essential GTPase which binds GTP, GDP and possibly (p)ppGpp with moderate affinity, with high nucleotide exchange rates and a fairly low GTP hydrolysis rate. Plays a role in control of the cell cycle, stress response, ribosome biogenesis and in those bacteria that undergo differentiation, in morphogenesis control. The polypeptide is GTPase Obg (Afipia carboxidovorans (strain ATCC 49405 / DSM 1227 / KCTC 32145 / OM5) (Oligotropha carboxidovorans)).